Reading from the N-terminus, the 308-residue chain is Ribosomal RNA large subunit methyltransferase F (308 aa).

The tract at residues 190–212 (DSAASARAGSERKRRNLGQDKND) is disordered.

This sequence belongs to the methyltransferase superfamily. METTL16/RlmF family.

It is found in the cytoplasm. It catalyses the reaction adenosine(1618) in 23S rRNA + S-adenosyl-L-methionine = N(6)-methyladenosine(1618) in 23S rRNA + S-adenosyl-L-homocysteine + H(+). Specifically methylates the adenine in position 1618 of 23S rRNA. This chain is Ribosomal RNA large subunit methyltransferase F, found in Citrobacter koseri (strain ATCC BAA-895 / CDC 4225-83 / SGSC4696).